The sequence spans 267 residues: uncharacterized protein (267 aa).

A disordered region spans residues 1–55 (MTEERKETFEEEINQSERIDADEEPLSRMSRKASRQSKQKQKQKQKPRQERGEST). Acidic residues predominate over residues 9-24 (FEEEINQSERIDADEE). The segment covering 29–46 (MSRKASRQSKQKQKQKQK) has biased composition (basic residues). 5 helical membrane-spanning segments follow: residues 93-115 (YKYGLISMLIFSIIFSIGNWFQL), 135-157 (GFLVVLVYLLIFFAVMVFAIWAV), 173-195 (AVLGSLLVPVIAVSILWLIFAIV), 199-221 (MLTVLFTVLILFSIFFIIALYVQ), and 234-256 (YIYCVFAVVAIALLFTAVTWPFI).

The protein localises to the cell membrane. This is an uncharacterized protein from Bacillus subtilis (strain 168).